Here is a 210-residue protein sequence, read N- to C-terminus: ATP-dependent Clp protease proteolytic subunit (210 aa).

The Nucleophile role is filled by Ser-107. His-132 is an active-site residue.

Belongs to the peptidase S14 family. As to quaternary structure, fourteen ClpP subunits assemble into 2 heptameric rings which stack back to back to give a disk-like structure with a central cavity, resembling the structure of eukaryotic proteasomes.

It localises to the cytoplasm. The enzyme catalyses Hydrolysis of proteins to small peptides in the presence of ATP and magnesium. alpha-casein is the usual test substrate. In the absence of ATP, only oligopeptides shorter than five residues are hydrolyzed (such as succinyl-Leu-Tyr-|-NHMec, and Leu-Tyr-Leu-|-Tyr-Trp, in which cleavage of the -Tyr-|-Leu- and -Tyr-|-Trp bonds also occurs).. Its function is as follows. Cleaves peptides in various proteins in a process that requires ATP hydrolysis. Has a chymotrypsin-like activity. Plays a major role in the degradation of misfolded proteins. The sequence is that of ATP-dependent Clp protease proteolytic subunit from Ruegeria sp. (strain TM1040) (Silicibacter sp.).